A 622-amino-acid chain; its full sequence is 1-deoxy-D-xylulose-5-phosphate synthase (622 aa).

Thiamine diphosphate-binding positions include H80 and 121-123; that span reads GHS. D152 lines the Mg(2+) pocket. Residues 153-154, N181, Y288, and E370 contribute to the thiamine diphosphate site; that span reads GA. N181 serves as a coordination point for Mg(2+).

It belongs to the transketolase family. DXPS subfamily. Homodimer. Requires Mg(2+) as cofactor. Thiamine diphosphate is required as a cofactor.

It carries out the reaction D-glyceraldehyde 3-phosphate + pyruvate + H(+) = 1-deoxy-D-xylulose 5-phosphate + CO2. It functions in the pathway metabolic intermediate biosynthesis; 1-deoxy-D-xylulose 5-phosphate biosynthesis; 1-deoxy-D-xylulose 5-phosphate from D-glyceraldehyde 3-phosphate and pyruvate: step 1/1. Its function is as follows. Catalyzes the acyloin condensation reaction between C atoms 2 and 3 of pyruvate and glyceraldehyde 3-phosphate to yield 1-deoxy-D-xylulose-5-phosphate (DXP). The polypeptide is 1-deoxy-D-xylulose-5-phosphate synthase (Shewanella baltica (strain OS155 / ATCC BAA-1091)).